A 232-amino-acid polypeptide reads, in one-letter code: Ubiquinone biosynthesis O-methyltransferase (232 aa).

Residues arginine 36, glycine 55, aspartate 76, and leucine 120 each coordinate S-adenosyl-L-methionine.

The protein belongs to the methyltransferase superfamily. UbiG/COQ3 family.

It carries out the reaction a 3-demethylubiquinol + S-adenosyl-L-methionine = a ubiquinol + S-adenosyl-L-homocysteine + H(+). The enzyme catalyses a 3-(all-trans-polyprenyl)benzene-1,2-diol + S-adenosyl-L-methionine = a 2-methoxy-6-(all-trans-polyprenyl)phenol + S-adenosyl-L-homocysteine + H(+). Its pathway is cofactor biosynthesis; ubiquinone biosynthesis. Its function is as follows. O-methyltransferase that catalyzes the 2 O-methylation steps in the ubiquinone biosynthetic pathway. The protein is Ubiquinone biosynthesis O-methyltransferase of Pseudomonas fluorescens (strain Pf0-1).